We begin with the raw amino-acid sequence, 376 residues long: Putative endoglucanase type K (376 aa).

Positions methionine 1–alanine 18 are cleaved as a signal peptide. The interval serine 19–lysine 308 is catalytic. Aspartate 29 functions as the Nucleophile in the catalytic mechanism. Catalysis depends on aspartate 140, which acts as the Proton donor. Positions alanine 229–alanine 332 are disordered. Low complexity-rich tracts occupy residues serine 235–glutamine 258 and lysine 291–valine 306. Residues proline 309 to proline 338 form a linker region. The CBM1 domain maps to serine 335–valine 374.

This sequence belongs to the glycosyl hydrolase 45 (cellulase K) family.

It catalyses the reaction Endohydrolysis of (1-&gt;4)-beta-D-glucosidic linkages in cellulose, lichenin and cereal beta-D-glucans.. In Fusarium oxysporum (Fusarium vascular wilt), this protein is Putative endoglucanase type K.